Here is a 316-residue protein sequence, read N- to C-terminus: Transaldolase (316 aa).

Lys126 serves as the catalytic Schiff-base intermediate with substrate.

It belongs to the transaldolase family. Type 1 subfamily. As to quaternary structure, homodimer.

The protein localises to the cytoplasm. It carries out the reaction D-sedoheptulose 7-phosphate + D-glyceraldehyde 3-phosphate = D-erythrose 4-phosphate + beta-D-fructose 6-phosphate. The protein operates within carbohydrate degradation; pentose phosphate pathway; D-glyceraldehyde 3-phosphate and beta-D-fructose 6-phosphate from D-ribose 5-phosphate and D-xylulose 5-phosphate (non-oxidative stage): step 2/3. In terms of biological role, transaldolase is important for the balance of metabolites in the pentose-phosphate pathway. In Methylibium petroleiphilum (strain ATCC BAA-1232 / LMG 22953 / PM1), this protein is Transaldolase.